A 223-amino-acid chain; its full sequence is Gastrula zinc finger protein XlCGF52.1 (223 aa).

8 consecutive C2H2-type zinc fingers follow at residues 6–27 (FTCPECGKRFSQKSNCWHTEDH), 33–55 (FTCMECSKSFTVKSSLLSHQRVH), 61–83 (YTCTQCNKQFSHSAQLRAHISTH), 89–111 (FPCTECSKTFSLKHKLYKHQRIH), 117–139 (FQCLECGKSFSVKHGLLKHQRSH), 145–167 (YACSECQKTFAHKTTLMVHERIH), 173–195 (YECNDCGKRFIHSTNLNCHQKIH), and 201–223 (FTCTECGKSFSLKNKLVRHQKIH).

This sequence belongs to the krueppel C2H2-type zinc-finger protein family.

Its subcellular location is the nucleus. In terms of biological role, may be involved in transcriptional regulation. The sequence is that of Gastrula zinc finger protein XlCGF52.1 from Xenopus laevis (African clawed frog).